The primary structure comprises 383 residues: Protein phosphatase 2C homolog 4 (383 aa).

In terms of domain architecture, PPM-type phosphatase spans 51–356; sequence SLGLCTARGD…DDITCLVVRL (306 aa). Positions 92, 308, and 347 each coordinate Mn(2+).

Belongs to the PP2C family. In terms of assembly, monomer. Requires Mg(2+) as cofactor. Mn(2+) serves as cofactor.

The protein localises to the vacuole membrane. The catalysed reaction is O-phospho-L-seryl-[protein] + H2O = L-seryl-[protein] + phosphate. The enzyme catalyses O-phospho-L-threonyl-[protein] + H2O = L-threonyl-[protein] + phosphate. In terms of biological role, has a role in the regulation of vacuole fusion. The protein is Protein phosphatase 2C homolog 4 (ptc4) of Schizosaccharomyces pombe (strain 972 / ATCC 24843) (Fission yeast).